The primary structure comprises 210 residues: Thioredoxin-like 3-1, chloroplastic (210 aa).

Residues 81–210 (WRLKAFWSNI…EVRELINKFV (130 aa)) form the Thioredoxin domain. Residues cysteine 130 and cysteine 133 each act as nucleophile in the active site. The cysteines at positions 130 and 133 are disulfide-linked.

This sequence belongs to the thioredoxin family.

It is found in the plastid. The protein localises to the chloroplast stroma. In terms of biological role, probable thiol-disulfide oxidoreductase that may participate in various redox reactions. This is Thioredoxin-like 3-1, chloroplastic (WCRKC1) from Arabidopsis thaliana (Mouse-ear cress).